The following is a 431-amino-acid chain: Enolase (431 aa).

Q175 serves as a coordination point for (2R)-2-phosphoglycerate. The active-site Proton donor is E217. Residues D254, E295, and D322 each coordinate Mg(2+). (2R)-2-phosphoglycerate-binding residues include K347, R376, S377, and K398. K347 (proton acceptor) is an active-site residue.

This sequence belongs to the enolase family. Mg(2+) is required as a cofactor.

It is found in the cytoplasm. It localises to the secreted. The protein resides in the cell surface. It carries out the reaction (2R)-2-phosphoglycerate = phosphoenolpyruvate + H2O. It functions in the pathway carbohydrate degradation; glycolysis; pyruvate from D-glyceraldehyde 3-phosphate: step 4/5. In terms of biological role, catalyzes the reversible conversion of 2-phosphoglycerate (2-PG) into phosphoenolpyruvate (PEP). It is essential for the degradation of carbohydrates via glycolysis. The protein is Enolase of Anaplasma marginale (strain St. Maries).